Reading from the N-terminus, the 850-residue chain is Mitochondrial escape protein 2 (850 aa).

The N-terminal 44 residues, 1–44, are a transit peptide targeting the mitochondrion; it reads MLLVRTTSLNVSRMPVPCLARGIGILKGKYRLANLMNAQPSVRH. Residues 44–66 form a disordered region; that stretch reads HVSSEIQQKDQQAGESNTATDTG. Residues 45–287 lie on the Mitochondrial matrix side of the membrane; that stretch reads VSSEIQQKDQ…VSNFFTNHTR (243 aa). A compositionally biased stretch (polar residues) spans 47–64; that stretch reads SEIQQKDQQAGESNTATD. Residues 198–272 form the RRM domain; sequence TTIVIKFQGP…TVLHIQYENI (75 aa). The helical transmembrane segment at 288-308 threads the bilayer; the sequence is IAIPVLFALLSIFAVLVFDPI. The Mitochondrial intermembrane segment spans residues 309-850; it reads REFSIEQKIT…CEEEIKNLSK (542 aa). Basic and acidic residues predominate over residues 607–621; it reads KGENVKEPESEKETA. The disordered stretch occupies residues 607 to 633; it reads KGENVKEPESEKETAENNDSDSEADTS.

It belongs to the YME2 family.

It localises to the mitochondrion inner membrane. Its function is as follows. Plays a role in maintaining the mitochondrial genome and in controlling the mtDNA escape. Involved in the regulation of mtDNA nucleotide structure and number. May have a dispensable role in early maturation of pre-rRNA. The protein is Mitochondrial escape protein 2 (YME2) of Saccharomyces cerevisiae (strain ATCC 204508 / S288c) (Baker's yeast).